We begin with the raw amino-acid sequence, 164 residues long: N5-carboxyaminoimidazole ribonucleotide mutase (164 aa).

Residues Ser-13, Asp-16, and Arg-43 each coordinate substrate.

Belongs to the AIR carboxylase family. Class I subfamily.

The catalysed reaction is 5-carboxyamino-1-(5-phospho-D-ribosyl)imidazole + H(+) = 5-amino-1-(5-phospho-D-ribosyl)imidazole-4-carboxylate. It participates in purine metabolism; IMP biosynthesis via de novo pathway; 5-amino-1-(5-phospho-D-ribosyl)imidazole-4-carboxylate from 5-amino-1-(5-phospho-D-ribosyl)imidazole (N5-CAIR route): step 2/2. Catalyzes the conversion of N5-carboxyaminoimidazole ribonucleotide (N5-CAIR) to 4-carboxy-5-aminoimidazole ribonucleotide (CAIR). The sequence is that of N5-carboxyaminoimidazole ribonucleotide mutase from Haemophilus influenzae (strain ATCC 51907 / DSM 11121 / KW20 / Rd).